We begin with the raw amino-acid sequence, 239 residues long: Large ribosomal subunit protein uL3 (239 aa).

Disordered regions lie at residues 140–164 (SHRSIGSTGGRQDPGKTWKNKKMPG) and 211–239 (PLPKEAPKPGKFKVAGEQAAEAPAMQEGA). At Gln-151 the chain carries N5-methylglutamine.

Belongs to the universal ribosomal protein uL3 family. As to quaternary structure, part of the 50S ribosomal subunit. Forms a cluster with proteins L14 and L19. Methylated by PrmB.

Its function is as follows. One of the primary rRNA binding proteins, it binds directly near the 3'-end of the 23S rRNA, where it nucleates assembly of the 50S subunit. This chain is Large ribosomal subunit protein uL3, found in Bradyrhizobium sp. (strain ORS 278).